Reading from the N-terminus, the 469-residue chain is Argininosuccinate lyase (469 aa).

It belongs to the lyase 1 family. Argininosuccinate lyase subfamily.

Its subcellular location is the cytoplasm. It catalyses the reaction 2-(N(omega)-L-arginino)succinate = fumarate + L-arginine. It participates in amino-acid biosynthesis; L-arginine biosynthesis; L-arginine from L-ornithine and carbamoyl phosphate: step 3/3. The polypeptide is Argininosuccinate lyase (Saccharophagus degradans (strain 2-40 / ATCC 43961 / DSM 17024)).